Here is a 63-residue protein sequence, read N- to C-terminus: Synergistic-type venom protein C9S3, chain 2 (63 aa).

3 cysteine pairs are disulfide-bonded: C3/C24, C17/C42, and C46/C57.

It belongs to the three-finger toxin family. Short-chain subfamily. Aminergic toxin sub-subfamily. In terms of assembly, heterodimer of C9S3 chain 1 (AC P01408) and chain 2, linked by at least two disulfide bonds. Expressed by the venom gland.

The protein resides in the secreted. In terms of biological role, this protein shows a synergetic toxic effect in that it enhances the toxicity of other D.angusticeps toxins. The polypeptide is Synergistic-type venom protein C9S3, chain 2 (Dendroaspis angusticeps (Eastern green mamba)).